The primary structure comprises 485 residues: PTS system arbutin-, cellobiose-, and salicin-specific EIIBC component (485 aa).

Residues 1 to 88 enclose the PTS EIIB type-1 domain; that stretch reads MAKNYAALAR…VSLLPGDMQP (88 aa). C28 acts as the Phosphocysteine intermediate; for EIIB activity in catalysis. 10 consecutive transmembrane segments (helical) span residues 102–122, 147–167, 177–197, 207–227, 254–274, 285–305, 330–350, 363–383, 389–409, and 433–453; these read IGAG…PAII, LTIL…MVAA, MSLA…ELMA, FALI…ALVM, LIVL…GIWI, IHGY…PLLV, VMPS…AVAW, AAAA…GVAI, LIAS…AGLA, and IVWV…LTLL. The 363-residue stretch at 108–470 folds into the PTS EIIC type-1 domain; that stretch reads DALIGTMSPL…VEEAAAQARK (363 aa).

The protein localises to the cell inner membrane. The phosphoenolpyruvate-dependent sugar phosphotransferase system (sugar PTS), a major carbohydrate active -transport system, catalyzes the phosphorylation of incoming sugar substrates concomitantly with their translocation across the cell membrane. This system is involved in arbutin, cellobiose, and salicin transport. This Escherichia coli (strain K12) protein is PTS system arbutin-, cellobiose-, and salicin-specific EIIBC component (ascF).